The following is a 299-amino-acid chain: ATP synthase gamma chain (299 aa).

It belongs to the ATPase gamma chain family. F-type ATPases have 2 components, CF(1) - the catalytic core - and CF(0) - the membrane proton channel. CF(1) has five subunits: alpha(3), beta(3), gamma(1), delta(1), epsilon(1). CF(0) has three main subunits: a, b and c.

The protein resides in the cell membrane. Produces ATP from ADP in the presence of a proton gradient across the membrane. The gamma chain is believed to be important in regulating ATPase activity and the flow of protons through the CF(0) complex. The polypeptide is ATP synthase gamma chain (Levilactobacillus brevis (strain ATCC 367 / BCRC 12310 / CIP 105137 / JCM 1170 / LMG 11437 / NCIMB 947 / NCTC 947) (Lactobacillus brevis)).